A 229-amino-acid polypeptide reads, in one-letter code: Mediator of RNA polymerase II transcription subunit 7 (229 aa).

The protein belongs to the Mediator complex subunit 7 family. Component of the Mediator complex.

The protein localises to the nucleus. Component of the Mediator complex, a coactivator involved in the regulated transcription of nearly all RNA polymerase II-dependent genes. Mediator functions as a bridge to convey information from gene-specific regulatory proteins to the basal RNA polymerase II transcription machinery. Mediator is recruited to promoters by direct interactions with regulatory proteins and serves as a scaffold for the assembly of a functional preinitiation complex with RNA polymerase II and the general transcription factors. The sequence is that of Mediator of RNA polymerase II transcription subunit 7 (med7) from Xenopus tropicalis (Western clawed frog).